Consider the following 707-residue polypeptide: Anaerobic ribonucleoside-triphosphate reductase (707 aa).

The region spanning 4–95 (FGVIKRDGSR…EYRHDRDLAR (92 aa)) is the ATP-cone domain. In terms of domain architecture, Glycine radical spans 584–707 (KKVNPYDKLD…EEVKRRVKHL (124 aa)). Zn(2+) contacts are provided by cysteine 645, cysteine 648, cysteine 663, and cysteine 666. Glycine 682 bears the Glycine radical mark.

Belongs to the anaerobic ribonucleoside-triphosphate reductase family. In terms of assembly, forms a tetramer composed of two NrdD and two NrdG subunits.

The catalysed reaction is a ribonucleoside 5'-triphosphate + formate + H(+) = a 2'-deoxyribonucleoside 5'-triphosphate + CO2 + H2O. Activated under anaerobic conditions by NrdG, a tightly associated activase. Activation involves the formation of a glycyl radical at Gly-682. Catalyzes the conversion of ribonucleotides into deoxyribonucleotides, which are required for DNA synthesis and repair. The chain is Anaerobic ribonucleoside-triphosphate reductase (nrdD) from Haemophilus influenzae (strain ATCC 51907 / DSM 11121 / KW20 / Rd).